An 860-amino-acid polypeptide reads, in one-letter code: Anoctamin-7 (860 aa).

Topologically, residues 1–297 (MLRKQAGEED…YFAWLGFYTG (297 aa)) are cytoplasmic. Positions 24–50 (NGCSYGSTAQASEAGKQQVAPSRVGSS) are disordered. Residues 298 to 318 (WLLPAAVVGTVVFLAGCFLVF) form a helical membrane-spanning segment. Residues 319 to 362 (SDVPTQELCHSSDTFDMCPLCSDCSFWLLSSACTLAQAGRLFDH) are Extracellular-facing. Residues 363–383 (GGTVFFSLFMALWAVLLLEYW) traverse the membrane as a helical segment. Residues 384–441 (KRKNATLAYRWDCSDYEDIEERPRPQFAATAPMTALNPITGEDEPYFPEKNRVRRMLA) lie on the Cytoplasmic side of the membrane. Residues 442–462 (GSVVLLMMVAVVIMCLVSIIL) traverse the membrane as a helical segment. Residues 463–492 (YRAVMAIIVSKSNNAFLSAWASRIASLTGS) lie on the Extracellular side of the membrane. The helical transmembrane segment at 493–513 (VVNLVFILILSKVYVILAQVL) threads the bilayer. At 514 to 530 (TRWEMHRTQTAFEDAFT) the chain is on the cytoplasmic side. Residues 531–551 (LKVFIFQFVNFYASPVYIAFF) form a helical membrane-spanning segment. Over 552 to 652 (KGRFVGYPGN…FHEYLEMVLQ (101 aa)) the chain is Extracellular. Residues 653-673 (FGFVTIFVAACPLAPLFALLN) form a helical membrane-spanning segment. Topologically, residues 674–701 (NWVEIRLDARKFVCEYRRPVAERAQDIG) are cytoplasmic. The chain crosses the membrane as a helical span at residues 702 to 722 (IWFHILAGLTHLAVISNAFLL). Topologically, residues 723–779 (AFSSDFLPRVYYSWTRAPDLRGFLNFTLARAPPTFTSAHNRTCRYRAFRDDDGHYSP) are extracellular. N747 and N762 each carry an N-linked (GlcNAc...) asparagine glycan. Residues 780–800 (TYWTLLAIRLAFVIVFEHVVF) traverse the membrane as a helical segment. The Cytoplasmic portion of the chain corresponds to 801 to 860 (STGRFLDLLVPDIPESVEIKVKREYYLAKQALADNEALLGATGVKGEQPPSSEPSLGLPA).

It belongs to the anoctamin family.

It is found in the cell membrane. The protein resides in the endoplasmic reticulum. It carries out the reaction a 1,2-diacyl-sn-glycero-3-phospho-L-serine(in) = a 1,2-diacyl-sn-glycero-3-phospho-L-serine(out). It catalyses the reaction a beta-D-galactosyl-(1&lt;-&gt;1')-N-acylsphing-4-enine(out) = a beta-D-galactosyl-(1&lt;-&gt;1')-N-acylsphing-4-enine(in). The catalysed reaction is a 1,2-diacyl-sn-glycero-3-phosphocholine(in) = a 1,2-diacyl-sn-glycero-3-phosphocholine(out). Its function is as follows. Has calcium-dependent phospholipid scramblase activity; scrambles phosphatidylserine, phosphatidylcholine and galactosylceramide. Does not exhibit calcium-activated chloride channel (CaCC) activity. May play a role in cell-cell interactions. In Rattus norvegicus (Rat), this protein is Anoctamin-7 (Ano7).